Consider the following 285-residue polypeptide: MAGAVSEARFAGLSLMQLHELLEDDAQLGDMVRGMEEAQTVQLNKEMTLASNRSLAEGNLLYQPQLDAQKARLTQKYQELQVLFEAYQIKKTKLDKQSNNASLETLLALLQAEGAKIEEDTENMAEKFLDGELPLDSFIDVYQSKRKLAHMRRVKVEKLQELVLKGQRHPQAGAPPPPRVPEPSPATALPYPSLEATGLPSVVPRRIPPPPPPVPAGHVATPFAAAMGSGQVSAYPGLQCPPLPPRVGLPSQQGFSAQLVSPYPPALPQRPPPRMAPHQPGFILQ.

The interaction with IST1 stretch occupies residues Ala-50–Pro-170. Residues Phe-84 to Gly-173 enclose the VPS37 C-terminal domain. Disordered stretches follow at residues Gln-167–Pro-215 and Pro-242–Gln-285. Pro residues-rich tracts occupy residues Gly-173–Ser-184 and Arg-206–Pro-215. Residues Pro-250–Leu-259 are compositionally biased toward polar residues. Over residues Pro-262 to Met-275 the composition is skewed to pro residues. The span at Ala-276–Gln-285 shows a compositional bias: low complexity.

This sequence belongs to the VPS37 family. Component of the ESCRT-I complex (endosomal sorting complex required for transport I) which consists of TSG101, VPS28, a VPS37 protein (VPS37A to -D) and MVB12A or MVB12B in a 1:1:1:1 stoichiometry. Interacts with TSG101, VPS28, MVB12A and MVB12B. Component of the ESCRT-I complex (endosomal sorting complex required for transport I) which consists of TSG101, VPS28, a VPS37 protein (VPS37A to -D) and UBAP1 in a 1:1:1:1 stoichiometry. Interacts with CEP55. Interacts with IST1.

It localises to the late endosome membrane. Functionally, component of the ESCRT-I complex, a regulator of vesicular trafficking process. Required for the sorting of endocytic ubiquitinated cargos into multivesicular bodies. May be involved in cell growth and differentiation. In Mus musculus (Mouse), this protein is Vacuolar protein sorting-associated protein 37B (Vps37b).